The primary structure comprises 147 residues: 3-dehydroquinate dehydratase (147 aa).

The active-site Proton acceptor is tyrosine 22. Substrate contacts are provided by asparagine 74, histidine 80, and aspartate 87. Catalysis depends on histidine 101, which acts as the Proton donor. Substrate is bound by residues 102–103 and arginine 112; that span reads IS.

The protein belongs to the type-II 3-dehydroquinase family. Homododecamer.

The enzyme catalyses 3-dehydroquinate = 3-dehydroshikimate + H2O. It functions in the pathway metabolic intermediate biosynthesis; chorismate biosynthesis; chorismate from D-erythrose 4-phosphate and phosphoenolpyruvate: step 3/7. Its function is as follows. Catalyzes a trans-dehydration via an enolate intermediate. This Lachnospira eligens (strain ATCC 27750 / DSM 3376 / VPI C15-48 / C15-B4) (Eubacterium eligens) protein is 3-dehydroquinate dehydratase.